A 421-amino-acid polypeptide reads, in one-letter code: Histidine--tRNA ligase (421 aa).

Belongs to the class-II aminoacyl-tRNA synthetase family. In terms of assembly, homodimer.

It localises to the cytoplasm. It catalyses the reaction tRNA(His) + L-histidine + ATP = L-histidyl-tRNA(His) + AMP + diphosphate + H(+). The sequence is that of Histidine--tRNA ligase from Francisella tularensis subsp. tularensis (strain SCHU S4 / Schu 4).